We begin with the raw amino-acid sequence, 159 residues long: Mating-type P-specific polypeptide Pi (159 aa).

Positions 103 to 159 (MTTVRGQCSKCTKPHLMRWLLLHYDNPYPSNSEFYDLSAATGLTRTQLRNWFSNRRR) form a DNA-binding region, homeobox; TALE-type; partial.

This sequence belongs to the TALE/M-ATYP homeobox family.

The protein localises to the nucleus. Functionally, mating type proteins are sequence specific DNA-binding proteins that act as master switches in yeast differentiation by controlling gene expression in a cell type-specific fashion. Required for meiosis, but plays no role in conjugation. The polypeptide is Mating-type P-specific polypeptide Pi (matPi) (Schizosaccharomyces kambucha (Fission yeast)).